Here is a 495-residue protein sequence, read N- to C-terminus: MSEEMNDQMQVRRQKLQELYDLGIDPFGQKFDRTSMATPLHEDWDQFSKEELHEKEEESHVSIAGRLMTKRGKGKAGFAHVQDLSGQIQIYVRKDQVGEDQFAIWNSADLGDIVGVEGVMFKTNTGELSVKAQSFTLLTKALRPLPDKFHGLQDIEQRYRQRYLDLITNQDSTQTFIKRSKILQEMRNYLNQQGFLEVETPMMHQIAGGAAARPFVTHHNALDATLYMRIAIELHLKRLIVGGLEKVYEIGRVFRNEGVSTRHNPEFTMIELYEAYADYHDIMDITENMIRHISEKVLGTAKVTYGEETIDLESKWKRIHMADAVKEETGVDFFNIQSDEDAKIAAKEHGIEITDNMKYGHILNEFFEQKVEETLIQPTFVYGHPIEISPLAKKNAEDPRFTDRFELFIVGREHGNAFTELNDPIDQRARFEAQLVEKEQGNDEAHEMDEDFIEALEYGMPPTGGLGIGIDRLVMLLTDSASIRDVLLFPYMRQK.

Positions 406 and 413 each coordinate Mg(2+).

The protein belongs to the class-II aminoacyl-tRNA synthetase family. Homodimer. It depends on Mg(2+) as a cofactor.

Its subcellular location is the cytoplasm. It carries out the reaction tRNA(Lys) + L-lysine + ATP = L-lysyl-tRNA(Lys) + AMP + diphosphate. The chain is Lysine--tRNA ligase from Staphylococcus saprophyticus subsp. saprophyticus (strain ATCC 15305 / DSM 20229 / NCIMB 8711 / NCTC 7292 / S-41).